The sequence spans 131 residues: Large-conductance mechanosensitive channel (131 aa).

3 consecutive transmembrane segments (helical) span residues 8–28 (FAVR…GAFG), 30–50 (IVSS…LGGI), and 67–87 (GAFL…FLFV).

This sequence belongs to the MscL family. In terms of assembly, homopentamer.

The protein localises to the cell membrane. Functionally, channel that opens in response to stretch forces in the membrane lipid bilayer. May participate in the regulation of osmotic pressure changes within the cell. The polypeptide is Large-conductance mechanosensitive channel (Anoxybacillus flavithermus (strain DSM 21510 / WK1)).